A 436-amino-acid chain; its full sequence is GTPase Der (436 aa).

EngA-type G domains follow at residues 3–168 and 177–352; these read PLIA…PESD and IRLA…DNRA. GTP is bound by residues 9 to 16, 56 to 60, 120 to 123, 183 to 190, 230 to 234, and 295 to 298; these read GRPNVGKS, DTGGY, NKVE, DTAGL, and NKWD. The region spanning 353–436 is the KH-like domain; it reads RKISTSALNR…VTISLRFLQK (84 aa).

Belongs to the TRAFAC class TrmE-Era-EngA-EngB-Septin-like GTPase superfamily. EngA (Der) GTPase family. As to quaternary structure, associates with the 50S ribosomal subunit.

GTPase that plays an essential role in the late steps of ribosome biogenesis. The polypeptide is GTPase Der (Chlorobium phaeovibrioides (strain DSM 265 / 1930) (Prosthecochloris vibrioformis (strain DSM 265))).